The chain runs to 279 residues: MELKCFIEILRPINCLIAGLVGILGATVALGHLPPIKTSLLIFLVVFLECSWGNIINDYFDYEIDKINRPNRPLPRGALSKNIALVYGISLGGVAILIAYLINFEAFIFALGAYLLMYLYARKLKPQPFIGNLVVATLTGITPIYGAIAVGKIGLAGYLALCAFLVNVAREIFKDIEDIEGDKAQGAKTLPIVWGIESSSKIGVIFSVATIIASLLPVKAGIGLGYFPIIIVDGIILWAAYEVLKNPSPKTAGRVQKKLKIAIYLAVFSFLLGSITKGV.

9 helical membrane-spanning segments follow: residues 16–36 (LIAG…LPPI), 40–60 (LLIF…NDYF), 77–99 (GALS…ILIA), 104–121 (FEAF…YLYA), 124–144 (LKPQ…ITPI), 146–166 (GAIA…AFLV), 192–212 (IVWG…ATII), 220–240 (AGIG…LWAA), and 259–279 (LKIA…TKGV).

Belongs to the UbiA prenyltransferase family. DGGGP synthase subfamily. Requires Mg(2+) as cofactor.

Its subcellular location is the cell membrane. It catalyses the reaction sn-3-O-(geranylgeranyl)glycerol 1-phosphate + (2E,6E,10E)-geranylgeranyl diphosphate = 2,3-bis-O-(geranylgeranyl)-sn-glycerol 1-phosphate + diphosphate. It functions in the pathway membrane lipid metabolism; glycerophospholipid metabolism. In terms of biological role, prenyltransferase that catalyzes the transfer of the geranylgeranyl moiety of geranylgeranyl diphosphate (GGPP) to the C2 hydroxyl of (S)-3-O-geranylgeranylglyceryl phosphate (GGGP). This reaction is the second ether-bond-formation step in the biosynthesis of archaeal membrane lipids. This chain is Digeranylgeranylglyceryl phosphate synthase, found in Thermococcus sibiricus (strain DSM 12597 / MM 739).